Consider the following 93-residue polypeptide: Alpha-defensin 3 (93 aa).

The N-terminal stretch at 1-16 is a signal peptide; that stretch reads MKTLVLLSALVLLAFQ. Positions 17 to 58 are excised as a propeptide; it reads VQADPIQNTDEETKTEEQPGEDDQAVSVSFGDPEGSSLQEES. The tract at residues 22 to 56 is disordered; it reads IQNTDEETKTEEQPGEDDQAVSVSFGDPEGSSLQE. Cystine bridges form between Cys64–Cys92, Cys66–Cys81, and Cys71–Cys91.

This sequence belongs to the alpha-defensin family. As to expression, paneth cells of the small bowel.

It is found in the secreted. Functionally, probably contributes to the antimicrobial barrier function of the small bowel mucosa. The polypeptide is Alpha-defensin 3 (Defa3) (Mus musculus (Mouse)).